We begin with the raw amino-acid sequence, 497 residues long: Glycerol kinase (497 aa).

Residue threonine 12 coordinates ADP. ATP is bound by residues threonine 12, threonine 13, and serine 14. A sn-glycerol 3-phosphate-binding site is contributed by threonine 12. ADP is bound at residue arginine 16. Residues arginine 82, glutamate 83, tyrosine 134, and aspartate 243 each coordinate sn-glycerol 3-phosphate. Arginine 82, glutamate 83, tyrosine 134, aspartate 243, and glutamine 244 together coordinate glycerol. Threonine 265 and glycine 308 together coordinate ADP. ATP-binding residues include threonine 265, glycine 308, glutamine 312, and glycine 409. ADP-binding residues include glycine 409 and asparagine 413.

Belongs to the FGGY kinase family. As to quaternary structure, homotetramer and homodimer (in equilibrium).

The catalysed reaction is glycerol + ATP = sn-glycerol 3-phosphate + ADP + H(+). Its pathway is polyol metabolism; glycerol degradation via glycerol kinase pathway; sn-glycerol 3-phosphate from glycerol: step 1/1. Its activity is regulated as follows. Activated by phosphorylation and inhibited by fructose 1,6-bisphosphate (FBP). Functionally, key enzyme in the regulation of glycerol uptake and metabolism. Catalyzes the phosphorylation of glycerol to yield sn-glycerol 3-phosphate. The polypeptide is Glycerol kinase (Thermoanaerobacter sp. (strain X514)).